The primary structure comprises 363 residues: UDP-N-acetylglucosamine--N-acetylmuramyl-(pentapeptide) pyrophosphoryl-undecaprenol N-acetylglucosamine transferase (363 aa).

Residues 12-14 (TAG), arginine 166, serine 196, and glutamine 291 each bind UDP-N-acetyl-alpha-D-glucosamine.

It belongs to the glycosyltransferase 28 family. MurG subfamily.

The protein resides in the cell inner membrane. The catalysed reaction is di-trans,octa-cis-undecaprenyl diphospho-N-acetyl-alpha-D-muramoyl-L-alanyl-D-glutamyl-meso-2,6-diaminopimeloyl-D-alanyl-D-alanine + UDP-N-acetyl-alpha-D-glucosamine = di-trans,octa-cis-undecaprenyl diphospho-[N-acetyl-alpha-D-glucosaminyl-(1-&gt;4)]-N-acetyl-alpha-D-muramoyl-L-alanyl-D-glutamyl-meso-2,6-diaminopimeloyl-D-alanyl-D-alanine + UDP + H(+). It functions in the pathway cell wall biogenesis; peptidoglycan biosynthesis. Its function is as follows. Cell wall formation. Catalyzes the transfer of a GlcNAc subunit on undecaprenyl-pyrophosphoryl-MurNAc-pentapeptide (lipid intermediate I) to form undecaprenyl-pyrophosphoryl-MurNAc-(pentapeptide)GlcNAc (lipid intermediate II). The sequence is that of UDP-N-acetylglucosamine--N-acetylmuramyl-(pentapeptide) pyrophosphoryl-undecaprenol N-acetylglucosamine transferase from Legionella pneumophila (strain Paris).